Reading from the N-terminus, the 416-residue chain is Pre-mRNA-splicing factor slu-7 (416 aa).

The tract at residues 1–34 (MPPPPPNRREQATAAPSSTDKSETGAGAARKEDN) is disordered. Residues 95-112 (GACENCGAMGHKKKDCLE) form a CCHC-type zinc finger. Composition is skewed to basic and acidic residues over residues 168–179 (RRALQGDQKTPD) and 188–213 (DDKSGFKYDEESDMGRDRATTKQSMR). The disordered stretch occupies residues 168 to 213 (RRALQGDQKTPDGEGADGPEDDKSGFKYDEESDMGRDRATTKQSMR).

The protein belongs to the SLU7 family. As to quaternary structure, associated with the spliceosome.

It is found in the nucleus. Functionally, involved in pre-mRNA splicing. This chain is Pre-mRNA-splicing factor slu-7 (slu-7), found in Neurospora crassa (strain ATCC 24698 / 74-OR23-1A / CBS 708.71 / DSM 1257 / FGSC 987).